We begin with the raw amino-acid sequence, 357 residues long: 3-dehydroquinate synthase (357 aa).

Residues 69 to 74, 103 to 107, 127 to 128, lysine 140, and lysine 149 contribute to the NAD(+) site; these read DGEKNK, GVIGD, and TT. Zn(2+) is bound by residues glutamate 182, histidine 245, and histidine 262.

Belongs to the sugar phosphate cyclases superfamily. Dehydroquinate synthase family. The cofactor is Co(2+). Requires Zn(2+) as cofactor. NAD(+) serves as cofactor.

It localises to the cytoplasm. The catalysed reaction is 7-phospho-2-dehydro-3-deoxy-D-arabino-heptonate = 3-dehydroquinate + phosphate. Its pathway is metabolic intermediate biosynthesis; chorismate biosynthesis; chorismate from D-erythrose 4-phosphate and phosphoenolpyruvate: step 2/7. Its function is as follows. Catalyzes the conversion of 3-deoxy-D-arabino-heptulosonate 7-phosphate (DAHP) to dehydroquinate (DHQ). This Shewanella denitrificans (strain OS217 / ATCC BAA-1090 / DSM 15013) protein is 3-dehydroquinate synthase.